The following is a 229-amino-acid chain: Ribosome maturation factor RimM (229 aa).

A disordered region spans residues 1-37; the sequence is MAGHDSGNAKRGRSPSFGVFVRKPVERTSAKGTSDGA. The PRC barrel domain occupies 148–229; that stretch reads ADEFYWVDLI…RVVVDWEADY (82 aa).

The protein belongs to the RimM family. In terms of assembly, binds ribosomal protein uS19.

It is found in the cytoplasm. Its function is as follows. An accessory protein needed during the final step in the assembly of 30S ribosomal subunit, possibly for assembly of the head region. Essential for efficient processing of 16S rRNA. May be needed both before and after RbfA during the maturation of 16S rRNA. It has affinity for free ribosomal 30S subunits but not for 70S ribosomes. In Burkholderia pseudomallei (strain 668), this protein is Ribosome maturation factor RimM.